Consider the following 701-residue polypeptide: DNA ligase (701 aa).

Residues 58–62 (DYEYD), 107–108 (SL), and Glu-138 each bind NAD(+). Lys-140 serves as the catalytic N6-AMP-lysine intermediate. The NAD(+) site is built by Arg-161, Glu-199, Lys-323, and Lys-347. Residues Cys-441, Cys-444, Cys-459, and Cys-464 each coordinate Zn(2+). Residues 621–701 (EKRGKLAGLN…EEFLKMIGQQ (81 aa)) enclose the BRCT domain.

The protein belongs to the NAD-dependent DNA ligase family. LigA subfamily. Mg(2+) serves as cofactor. Mn(2+) is required as a cofactor.

The catalysed reaction is NAD(+) + (deoxyribonucleotide)n-3'-hydroxyl + 5'-phospho-(deoxyribonucleotide)m = (deoxyribonucleotide)n+m + AMP + beta-nicotinamide D-nucleotide.. In terms of biological role, DNA ligase that catalyzes the formation of phosphodiester linkages between 5'-phosphoryl and 3'-hydroxyl groups in double-stranded DNA using NAD as a coenzyme and as the energy source for the reaction. It is essential for DNA replication and repair of damaged DNA. This is DNA ligase from Sulfurihydrogenibium azorense (strain DSM 15241 / OCM 825 / Az-Fu1).